The sequence spans 478 residues: Alpha,alpha-trehalose-phosphate synthase [UDP-forming] (478 aa).

Positions 89 and 143 each coordinate D-glucose 6-phosphate. The UDP site is built by Arg280 and Lys285. UDP-alpha-D-glucose-binding residues include Arg280 and Lys285. Arg318 contacts D-glucose 6-phosphate. Residues Ile357 and 383 to 387 (LVSYE) contribute to the UDP site. Residues Ile357 and 379–387 (DGMNLVSYE) each bind UDP-alpha-D-glucose.

The protein belongs to the glycosyltransferase 20 family.

It carries out the reaction D-glucose 6-phosphate + UDP-alpha-D-glucose = alpha,alpha-trehalose 6-phosphate + UDP + H(+). It participates in carbohydrate biosynthesis. Inhibited by validoxylamine A, a non-reactive trehalose analog. Synthase catalytic subunit of the trehalose synthase complex that catalyzes the production of trehalose from glucose-6-phosphate and UDP-alpha-D-glucose in a two step process. This chain is Alpha,alpha-trehalose-phosphate synthase [UDP-forming], found in Candida albicans (strain SC5314 / ATCC MYA-2876) (Yeast).